The chain runs to 711 residues: Polyribonucleotide nucleotidyltransferase (711 aa).

The Mg(2+) site is built by Asp-486 and Asp-492. Residues 553 to 612 (PRIHTIKINPDKIKDVIGKGGSVIRALTEETGTTIEIEDDGTVKIAATDGEKAKHAIRRI) enclose the KH domain. The S1 motif domain occupies 622 to 690 (GRVYNGKVTR…RQGRIRLSIK (69 aa)). The disordered stretch occupies residues 689–711 (IKEATEQSQPAAAPEAPAAEQGE). Low complexity predominate over residues 694-711 (EQSQPAAAPEAPAAEQGE).

The protein belongs to the polyribonucleotide nucleotidyltransferase family. As to quaternary structure, component of the RNA degradosome, which is a multiprotein complex involved in RNA processing and mRNA degradation. Mg(2+) serves as cofactor.

The protein resides in the cytoplasm. The enzyme catalyses RNA(n+1) + phosphate = RNA(n) + a ribonucleoside 5'-diphosphate. Functionally, involved in mRNA degradation. Catalyzes the phosphorolysis of single-stranded polyribonucleotides processively in the 3'- to 5'-direction. In Escherichia coli O6:K15:H31 (strain 536 / UPEC), this protein is Polyribonucleotide nucleotidyltransferase.